A 134-amino-acid polypeptide reads, in one-letter code: Cytochrome b (134 aa).

3 helical membrane passes run 33 to 53 (FGSL…FLAM), 77 to 98 (WLIR…FLHV), and 113 to 133 (WNMG…GYVL). 2 residues coordinate heme b: His83 and His97.

It belongs to the cytochrome b family. As to quaternary structure, the cytochrome bc1 complex contains 11 subunits: 3 respiratory subunits (MT-CYB, CYC1 and UQCRFS1), 2 core proteins (UQCRC1 and UQCRC2) and 6 low-molecular weight proteins (UQCRH/QCR6, UQCRB/QCR7, UQCRQ/QCR8, UQCR10/QCR9, UQCR11/QCR10 and a cleavage product of UQCRFS1). This cytochrome bc1 complex then forms a dimer. Heme b serves as cofactor.

It localises to the mitochondrion inner membrane. Component of the ubiquinol-cytochrome c reductase complex (complex III or cytochrome b-c1 complex) that is part of the mitochondrial respiratory chain. The b-c1 complex mediates electron transfer from ubiquinol to cytochrome c. Contributes to the generation of a proton gradient across the mitochondrial membrane that is then used for ATP synthesis. This Microtus subterraneus (European pine vole) protein is Cytochrome b (MT-CYB).